The primary structure comprises 95 residues: Class II hydrophobin 3 (95 aa).

An N-terminal signal peptide occupies residues 1 to 16 (MKLLAVAALLAGAAIA). Disulfide bonds link C28/C77, C38/C68, C39/C51, and C78/C89.

The protein belongs to the cerato-ulmin hydrophobin family.

It localises to the secreted. The protein localises to the cell wall. Its function is as follows. Aerial growth, conidiation, and dispersal of filamentous fungi in the environment rely upon a capability of their secreting small amphipathic proteins called hydrophobins (HPBs) with low sequence identity. Class I can self-assemble into an outermost layer of rodlet bundles on aerial cell surfaces, conferring cellular hydrophobicity that supports fungal growth, development and dispersal; whereas Class II form highly ordered films at water-air interfaces through intermolecular interactions but contribute nothing to the rodlet structure. Hyd3 plays a neglectable role in hyphal growth and asexual development and does not seem involved in cellular hydrophobicity, conidial adhesion, stress tolerance nor insect pathogenicity. This Metarhizium robertsii (strain ARSEF 23 / ATCC MYA-3075) (Metarhizium anisopliae (strain ARSEF 23)) protein is Class II hydrophobin 3.